A 356-amino-acid polypeptide reads, in one-letter code: Tyrosine recombinase XerS (356 aa).

Residues 16–121 (IMPWYVLDYY…ALSSLYKYLT (106 aa)) enclose the Core-binding (CB) domain. Residues 169-354 (AFLDYVDKEY…VNDEQKNALD (186 aa)) enclose the Tyr recombinase domain. Catalysis depends on residues Arg-210, Lys-234, His-306, Arg-309, and His-332. The active-site O-(3'-phospho-DNA)-tyrosine intermediate is the Tyr-341.

It belongs to the 'phage' integrase family. XerS subfamily.

Its subcellular location is the cytoplasm. With respect to regulation, ftsK is required for recombination. Functionally, site-specific tyrosine recombinase, which acts by catalyzing the cutting and rejoining of the recombining DNA molecules. Essential to convert dimers of the bacterial chromosome into monomers to permit their segregation at cell division. This Streptococcus pyogenes serotype M2 (strain MGAS10270) protein is Tyrosine recombinase XerS.